The primary structure comprises 260 residues: MTKTPPAPEPDVLFGATDERQFIPQQQTPAAAPAPAEDAHYHGHRDRLRARYREYGDAALADYEILELILFRLIPRRDTKPIAKALLARFGTLAGVFGAPLHLLHEVKGVKESVALDLKLVATASHRMLKSELRNKQVLSSWSAVIDYCHAAMAHETKEQFRILFLDKRNTLIADEVQQQGTIDHTPVYPREVVKRALELSATALILVHNHPSGDPTPSCADIEMTKLIAEAAKPLGIALHDHVIIGKDGHVSLKGLQLF.

The 123-residue stretch at 138–260 folds into the MPN domain; it reads VLSSWSAVID…HVSLKGLQLF (123 aa). Residues His-209, His-211, and Asp-222 each contribute to the Zn(2+) site. Residues 209-222 carry the JAMM motif motif; the sequence is HNHPSGDPTPSCAD.

The protein belongs to the UPF0758 family.

In Sinorhizobium medicae (strain WSM419) (Ensifer medicae), this protein is UPF0758 protein Smed_1459.